The sequence spans 278 residues: Proline-rich 28 kDa antigen homolog (278 aa).

Positions 1–28 (MIQSTQTWRVLAGGLAATAMGVTVFAGG) are cleaved as a signal peptide.

It to M.tuberculosis Rv0040c.

The chain is Proline-rich 28 kDa antigen homolog from Mycobacterium leprae (strain TN).